We begin with the raw amino-acid sequence, 432 residues long: PC-esterase domain-containing protein 1B (432 aa).

Disordered stretches follow at residues 264 to 293 (EWIK…LSPP) and 398 to 432 (RGFG…PRPQ).

It belongs to the PC-esterase family.

The chain is PC-esterase domain-containing protein 1B from Homo sapiens (Human).